Reading from the N-terminus, the 211-residue chain is Adenylate kinase (211 aa).

ATP is bound at residue 10-15; the sequence is GAGKGT. Residues 30-59 form an NMP region; that stretch reads STGGILRAAIQKQTALGKKVQKVVEVGGLV. Residues Thr31, Arg36, 57–59, 85–88, and Gln92 each bind AMP; these read GLV and GFPR. An LID region spans residues 121-158; sequence GRRVCSACGSSYHVLFAQPKREGVCDRCRGVLVVREDD. Arg122 provides a ligand contact to ATP. 2 residues coordinate Zn(2+): Cys125 and Cys128. 131 to 132 contacts ATP; sequence SY. Zn(2+)-binding residues include Cys145 and Cys148. Residues Arg155 and Arg166 each contribute to the AMP site. Pro194 is a binding site for ATP.

The protein belongs to the adenylate kinase family. As to quaternary structure, monomer.

Its subcellular location is the cytoplasm. It catalyses the reaction AMP + ATP = 2 ADP. It functions in the pathway purine metabolism; AMP biosynthesis via salvage pathway; AMP from ADP: step 1/1. Its function is as follows. Catalyzes the reversible transfer of the terminal phosphate group between ATP and AMP. Plays an important role in cellular energy homeostasis and in adenine nucleotide metabolism. This chain is Adenylate kinase, found in Treponema pallidum (strain Nichols).